A 207-amino-acid chain; its full sequence is Large ribosomal subunit protein uL4 (207 aa).

The segment at 47–78 (GTASSKTRAEVRGGGKKPWRQKGTGRARVGSS) is disordered. Over residues 60 to 71 (GGKKPWRQKGTG) the composition is skewed to basic residues.

Belongs to the universal ribosomal protein uL4 family. In terms of assembly, part of the 50S ribosomal subunit.

In terms of biological role, one of the primary rRNA binding proteins, this protein initially binds near the 5'-end of the 23S rRNA. It is important during the early stages of 50S assembly. It makes multiple contacts with different domains of the 23S rRNA in the assembled 50S subunit and ribosome. Forms part of the polypeptide exit tunnel. This Syntrophomonas wolfei subsp. wolfei (strain DSM 2245B / Goettingen) protein is Large ribosomal subunit protein uL4.